The following is a 430-amino-acid chain: N-lysine methyltransferase SMYD2-B (430 aa).

Residues Glu5–Ile239 form the SET domain. Residue Lys15–Arg17 participates in S-adenosyl-L-methionine binding. Positions 50, 53, 63, 66, 72, 76, 84, and 88 each coordinate Zn(2+). Residues Cys50 to Cys88 form an MYND-type zinc finger. Residues His135, Asn204–His205, and Tyr256–Phe258 each bind S-adenosyl-L-methionine.

It belongs to the class V-like SAM-binding methyltransferase superfamily.

The protein resides in the cytoplasm. It localises to the cytosol. It is found in the nucleus. The enzyme catalyses L-lysyl(4)-[histone H3] + 3 S-adenosyl-L-methionine = N(6),N(6),N(6)-trimethyl-L-lysyl(4)-[histone H3] + 3 S-adenosyl-L-homocysteine + 3 H(+). It carries out the reaction L-lysyl-[protein] + S-adenosyl-L-methionine = N(6)-methyl-L-lysyl-[protein] + S-adenosyl-L-homocysteine + H(+). Its function is as follows. Protein-lysine N-methyltransferase that methylates both histones and non-histone proteins, including p53/TP53 and RB1. Specifically trimethylates histone H3 'Lys-4' (H3K4me3) in vivo. The activity requires interaction with HSP90alpha. Shows even higher methyltransferase activity on p53/TP53. Monomethylates 'Lys-370' of p53/TP53, leading to decreased DNA-binding activity and subsequent transcriptional regulation activity of p53/TP53. Monomethylates RB1 at 'Lys-860'. The sequence is that of N-lysine methyltransferase SMYD2-B (smyd2-b) from Xenopus laevis (African clawed frog).